Reading from the N-terminus, the 158-residue chain is Transcription elongation factor GreA (158 aa).

Residues 48–74 (EYDAAKNRQGFIEGRIKELNDKIARAE) are a coiled coil.

The protein belongs to the GreA/GreB family.

Its function is as follows. Necessary for efficient RNA polymerase transcription elongation past template-encoded arresting sites. The arresting sites in DNA have the property of trapping a certain fraction of elongating RNA polymerases that pass through, resulting in locked ternary complexes. Cleavage of the nascent transcript by cleavage factors such as GreA or GreB allows the resumption of elongation from the new 3'terminus. GreA releases sequences of 2 to 3 nucleotides. This chain is Transcription elongation factor GreA, found in Syntrophotalea carbinolica (strain DSM 2380 / NBRC 103641 / GraBd1) (Pelobacter carbinolicus).